The following is a 242-amino-acid chain: Proteasome subunit alpha (242 aa).

This sequence belongs to the peptidase T1A family. The 20S proteasome core is composed of 14 alpha and 14 beta subunits that assemble into four stacked heptameric rings, resulting in a barrel-shaped structure. The two inner rings, each composed of seven catalytic beta subunits, are sandwiched by two outer rings, each composed of seven alpha subunits. The catalytic chamber with the active sites is on the inside of the barrel. Has a gated structure, the ends of the cylinder being occluded by the N-termini of the alpha-subunits. Is capped at one or both ends by the proteasome regulatory ATPase, PAN.

The protein localises to the cytoplasm. The formation of the proteasomal ATPase PAN-20S proteasome complex, via the docking of the C-termini of PAN into the intersubunit pockets in the alpha-rings, triggers opening of the gate for substrate entry. Interconversion between the open-gate and close-gate conformations leads to a dynamic regulation of the 20S proteasome proteolysis activity. In terms of biological role, component of the proteasome core, a large protease complex with broad specificity involved in protein degradation. The protein is Proteasome subunit alpha of Sulfurisphaera tokodaii (strain DSM 16993 / JCM 10545 / NBRC 100140 / 7) (Sulfolobus tokodaii).